The chain runs to 92 residues: Protein OP-ORF (92 aa).

Residues 53-82 (KMLAATISILEEEVTELVTELNNTTNLTAK) adopt a coiled-coil conformation.

The polypeptide is Protein OP-ORF (Rice dwarf virus (isolate Fujian) (RDV)).